A 444-amino-acid polypeptide reads, in one-letter code: Baeyer-Villiger oxidase ptaJ (444 aa).

This sequence belongs to the questin oxidase family. Requires NADPH as cofactor.

Its pathway is secondary metabolite biosynthesis. Its function is as follows. Baeyer-Villiger oxidase; part of the gene cluster that mediates the biosynthesis of pestheic acid, a diphenyl ether which is a biosynthetic precursor of the unique chloropupukeananes. The biosynthesis initiates from condensation of acetate and malonate units catalyzed by the non-reducing PKS ptaA. As the ptaA protein is TE/CLC domain-deficient, hydrolysis and Claisen cyclization of the polyketide could be catalyzed by ptaB containing a beta-lactamase domain. The ptaB protein might hydrolyze the thioester bond between the ACP of ptaA and the intermediate to release atrochrysone carboxylic acid, which is spontaneously dehydrated to form endocrocin anthrone. Endocrocin anthrone is then converted to endocrocin, catalyzed by the anthrone oxygenase ptaC. Spontaneous decarboxylation of endocrocin occurs to generate emodin. An O-methyltransferase (ptaH or ptaI) could methylate emodin to form physcion. PtaJ could then catalyze the oxidative cleavage of physcion, and rotation of the intermediate could then afford desmethylisosulochrin. PtaF, a putative NADH-dependent oxidoreductase, might also participate in the oxidative cleavage step. Desmethylisosulochrin is then transformed by another O-methyltransferase (ptaH or ptaI) to form isosulochrin. Chlorination of isosulochrin by ptaM in the cyclohexadienone B ring then produces chloroisosulochrin. PtaE is responsible for the oxidative coupling reactions of both benzophenones isosulouchrin and chloroisosulouchrin to RES-1214-1 and pestheic acid respectively, regardless of chlorination. The protein is Baeyer-Villiger oxidase ptaJ of Pestalotiopsis fici (strain W106-1 / CGMCC3.15140).